We begin with the raw amino-acid sequence, 658 residues long: Endoplasmic reticulum mannosyl-oligosaccharide 1,2-alpha-mannosidase (658 aa).

Residues 1-50 lie on the Cytoplasmic side of the membrane; that stretch reads MYPPPAPPPAPHRDFISVTLSLGESYDNSKSRRRRSCWRKWKQLSRLQRN. Residues 51–71 traverse the membrane as a helical; Signal-anchor for type II membrane protein segment; it reads VILFVLGFLILCGFLYSLHTA. The Lumenal portion of the chain corresponds to 72–658; that stretch reads DQWKALSGRP…AHPLPIWAPA (587 aa). Ser102 is subject to Phosphoserine. Residues 123–142 are disordered; it reads GPPHLQIRPPNTVSKDGMQD. Glu289 functions as the Proton donor in the catalytic mechanism. Asp422 is a catalytic residue. Cysteines 486 and 515 form a disulfide. The Proton donor role is filled by Glu529. Glu558 is a catalytic residue. A Ca(2+)-binding site is contributed by Thr647.

The protein belongs to the glycosyl hydrolase 47 family. Ca(2+) is required as a cofactor.

It localises to the endoplasmic reticulum membrane. It carries out the reaction N(4)-(alpha-D-Man-(1-&gt;2)-alpha-D-Man-(1-&gt;2)-alpha-D-Man-(1-&gt;3)-[alpha-D-Man-(1-&gt;2)-alpha-D-Man-(1-&gt;3)-[alpha-D-Man-(1-&gt;2)-alpha-D-Man-(1-&gt;6)]-alpha-D-Man-(1-&gt;6)]-beta-D-Man-(1-&gt;4)-beta-D-GlcNAc-(1-&gt;4)-beta-D-GlcNAc)-L-asparaginyl-[protein] (N-glucan mannose isomer 9A1,2,3B1,2,3) + 4 H2O = N(4)-(alpha-D-Man-(1-&gt;3)-[alpha-D-Man-(1-&gt;3)-[alpha-D-Man-(1-&gt;6)]-alpha-D-Man-(1-&gt;6)]-beta-D-Man-(1-&gt;4)-beta-D-GlcNAc-(1-&gt;4)-beta-D-GlcNAc)-L-asparaginyl-[protein] (N-glucan mannose isomer 5A1,2) + 4 beta-D-mannose. The enzyme catalyses N(4)-(alpha-D-Man-(1-&gt;2)-alpha-D-Man-(1-&gt;2)-alpha-D-Man-(1-&gt;3)-[alpha-D-Man-(1-&gt;3)-[alpha-D-Man-(1-&gt;2)-alpha-D-Man-(1-&gt;6)]-alpha-D-Man-(1-&gt;6)]-beta-D-Man-(1-&gt;4)-beta-D-GlcNAc-(1-&gt;4)-beta-D-GlcNAc)-L-asparaginyl-[protein] (N-glucan mannose isomer 8A1,2,3B1,3) + 3 H2O = N(4)-(alpha-D-Man-(1-&gt;3)-[alpha-D-Man-(1-&gt;3)-[alpha-D-Man-(1-&gt;6)]-alpha-D-Man-(1-&gt;6)]-beta-D-Man-(1-&gt;4)-beta-D-GlcNAc-(1-&gt;4)-beta-D-GlcNAc)-L-asparaginyl-[protein] (N-glucan mannose isomer 5A1,2) + 3 beta-D-mannose. It functions in the pathway protein modification; protein glycosylation. Functionally, involved in glycoprotein quality control targeting of misfolded glycoproteins for degradation. It primarily trims a single alpha-1,2-linked mannose residue from Man(9)GlcNAc(2) to produce Man(8)GlcNAc(2), but at high enzyme concentrations, as found in the ER quality control compartment (ERQC), it further trims the carbohydrates to Man(5-6)GlcNAc(2). This is Endoplasmic reticulum mannosyl-oligosaccharide 1,2-alpha-mannosidase (Man1b1) from Mus musculus (Mouse).